The following is a 374-amino-acid chain: S-adenosylmethionine:tRNA ribosyltransferase-isomerase (374 aa).

It belongs to the QueA family. In terms of assembly, monomer.

It is found in the cytoplasm. The catalysed reaction is 7-aminomethyl-7-carbaguanosine(34) in tRNA + S-adenosyl-L-methionine = epoxyqueuosine(34) in tRNA + adenine + L-methionine + 2 H(+). It participates in tRNA modification; tRNA-queuosine biosynthesis. Transfers and isomerizes the ribose moiety from AdoMet to the 7-aminomethyl group of 7-deazaguanine (preQ1-tRNA) to give epoxyqueuosine (oQ-tRNA). The polypeptide is S-adenosylmethionine:tRNA ribosyltransferase-isomerase (Prochlorococcus marinus (strain MIT 9215)).